Reading from the N-terminus, the 279-residue chain is DegV domain-containing protein CA_C0701 (279 aa).

A DegV domain is found at 4-277 (IKIVTDSTCD…TKACGVFFIE (274 aa)). Residues threonine 62 and serine 94 each coordinate hexadecanoate.

In terms of biological role, may bind long-chain fatty acids, such as palmitate, and may play a role in lipid transport or fatty acid metabolism. This chain is DegV domain-containing protein CA_C0701, found in Clostridium acetobutylicum (strain ATCC 824 / DSM 792 / JCM 1419 / IAM 19013 / LMG 5710 / NBRC 13948 / NRRL B-527 / VKM B-1787 / 2291 / W).